The primary structure comprises 530 residues: Alkali-sensitive linkage protein 1 (530 aa).

Positions 1–18 (MRTTFATVALAFLSTVGA) are cleaved as a signal peptide. N-linked (GlcNAc...) asparagine glycosylation occurs at N55. Positions 69-90 (SVTESSDDGASTALPTTSTESV) are disordered. Residues N120 and N128 are each glycosylated (N-linked (GlcNAc...) asparagine).

It localises to the endoplasmic reticulum. It is found in the golgi apparatus. The protein localises to the secreted. The protein resides in the cell wall. The polypeptide is Alkali-sensitive linkage protein 1 (asl1) (Schizosaccharomyces pombe (strain 972 / ATCC 24843) (Fission yeast)).